We begin with the raw amino-acid sequence, 87 residues long: Glutaredoxin 1 (87 aa).

Residues 1–87 enclose the Glutaredoxin domain; it reads MFTVIFGRPG…WAKENLNLFA (87 aa). A disulfide bridge connects residues C11 and C14.

This sequence belongs to the glutaredoxin family. As to quaternary structure, monomer.

The disulfide bond functions as an electron carrier in the glutathione-dependent synthesis of deoxyribonucleotides by the enzyme ribonucleotide reductase. In addition, it is also involved in reducing some disulfides in a coupled system with glutathione reductase. The sequence is that of Glutaredoxin 1 (grxA) from Salmonella typhi.